The primary structure comprises 130 residues: Small ribosomal subunit protein uS9 (130 aa).

The tract at residues 109–130 (RMKERKKYGLKAARRAPQFSKR) is disordered. Residues 111 to 130 (KERKKYGLKAARRAPQFSKR) are compositionally biased toward basic residues.

This sequence belongs to the universal ribosomal protein uS9 family.

This is Small ribosomal subunit protein uS9 from Lachnoclostridium phytofermentans (strain ATCC 700394 / DSM 18823 / ISDg) (Clostridium phytofermentans).